A 121-amino-acid chain; its full sequence is Small ribosomal subunit protein uS11 (121 aa).

Belongs to the universal ribosomal protein uS11 family. Part of the 30S ribosomal subunit. Interacts with proteins S7 and S18. Binds to IF-3.

In terms of biological role, located on the platform of the 30S subunit, it bridges several disparate RNA helices of the 16S rRNA. Forms part of the Shine-Dalgarno cleft in the 70S ribosome. The polypeptide is Small ribosomal subunit protein uS11 (Mycoplasma pneumoniae (strain ATCC 29342 / M129 / Subtype 1) (Mycoplasmoides pneumoniae)).